Consider the following 148-residue polypeptide: Large ribosomal subunit protein bL9 (148 aa).

This sequence belongs to the bacterial ribosomal protein bL9 family.

Binds to the 23S rRNA. In Heliobacterium modesticaldum (strain ATCC 51547 / Ice1), this protein is Large ribosomal subunit protein bL9.